Reading from the N-terminus, the 225-residue chain is Cytidylate kinase (225 aa).

11–19 (GPAAAGKST) provides a ligand contact to ATP.

This sequence belongs to the cytidylate kinase family. Type 1 subfamily.

It localises to the cytoplasm. The catalysed reaction is CMP + ATP = CDP + ADP. It carries out the reaction dCMP + ATP = dCDP + ADP. This is Cytidylate kinase from Bacillus cereus (strain ATCC 10987 / NRS 248).